The following is a 178-amino-acid chain: Interleukin-10 (178 aa).

Positions 1 to 18 (MPGSALLCCLALLAGVKA) are cleaved as a signal peptide. Intrachain disulfides connect Cys30/Cys126 and Cys80/Cys132. An N-linked (GlcNAc...) asparagine glycan is attached at Asn67. A glycan (N-linked (GlcNAc...) asparagine) is linked at Asn134.

Belongs to the IL-10 family. In terms of assembly, homodimer. Interacts with IL10RA and IL10RB.

Its subcellular location is the secreted. Functionally, major immune regulatory cytokine that acts on many cells of the immune system where it has profound anti-inflammatory functions, limiting excessive tissue disruption caused by inflammation. Mechanistically, IL10 binds to its heterotetrameric receptor comprising IL10RA and IL10RB leading to JAK1 and STAT2-mediated phosphorylation of STAT3. In turn, STAT3 translocates to the nucleus where it drives expression of anti-inflammatory mediators. Targets antigen-presenting cells (APCs) such as macrophages and monocytes and inhibits their release of pro-inflammatory cytokines including granulocyte-macrophage colony-stimulating factor /GM-CSF, granulocyte colony-stimulating factor/G-CSF, IL-1 alpha, IL-1 beta, IL-6, IL-8 and TNF-alpha. Also interferes with antigen presentation by reducing the expression of MHC-class II and co-stimulatory molecules, thereby inhibiting their ability to induce T cell activation. In addition, controls the inflammatory response of macrophages by reprogramming essential metabolic pathways including mTOR signaling. This Cavia porcellus (Guinea pig) protein is Interleukin-10 (IL10).